Consider the following 296-residue polypeptide: Nucleotide-binding protein SPCG_1551 (296 aa).

Residue 13–20 (GMSGAGKT) participates in ATP binding. 63–66 (DMRS) contributes to the GTP binding site.

It belongs to the RapZ-like family.

Functionally, displays ATPase and GTPase activities. In Streptococcus pneumoniae (strain CGSP14), this protein is Nucleotide-binding protein SPCG_1551.